The primary structure comprises 196 residues: Serine recombinase PinQ (196 aa).

A Resolvase/invertase-type recombinase catalytic domain is found at 3–143; the sequence is QIFAYCRIST…SGIVRARGAG (141 aa). Residue Ser11 is the O-(5'-phospho-DNA)-serine intermediate of the active site.

This sequence belongs to the site-specific recombinase resolvase family.

This Escherichia coli (strain K12) protein is Serine recombinase PinQ (pinQ).